The chain runs to 209 residues: Small ribosomal subunit protein uS4 (209 aa).

Residues 99-162 (RRLDNVVYRL…RESNKFQEMK (64 aa)) form the S4 RNA-binding domain.

It belongs to the universal ribosomal protein uS4 family. In terms of assembly, part of the 30S ribosomal subunit. Contacts protein S5. The interaction surface between S4 and S5 is involved in control of translational fidelity.

One of the primary rRNA binding proteins, it binds directly to 16S rRNA where it nucleates assembly of the body of the 30S subunit. Its function is as follows. With S5 and S12 plays an important role in translational accuracy. This chain is Small ribosomal subunit protein uS4, found in Syntrophomonas wolfei subsp. wolfei (strain DSM 2245B / Goettingen).